A 339-amino-acid polypeptide reads, in one-letter code: Ketol-acid reductoisomerase (NADP(+)) (339 aa).

One can recognise a KARI N-terminal Rossmann domain in the interval 1–182 (MRVYYDRDAD…GGGRSGVIET (182 aa)). NADP(+) is bound by residues 24–27 (YGSQ), Arg48, Ser51, Thr53, and 83–86 (DELQ). His108 is a catalytic residue. Gly134 contacts NADP(+). Residues 183–328 (NFREECETDL…GRLRAMMPWI (146 aa)) enclose the KARI C-terminal knotted domain. Asp191, Glu195, Glu227, and Glu231 together coordinate Mg(2+). Ser252 is a binding site for substrate.

This sequence belongs to the ketol-acid reductoisomerase family. The cofactor is Mg(2+).

It catalyses the reaction (2R)-2,3-dihydroxy-3-methylbutanoate + NADP(+) = (2S)-2-acetolactate + NADPH + H(+). The enzyme catalyses (2R,3R)-2,3-dihydroxy-3-methylpentanoate + NADP(+) = (S)-2-ethyl-2-hydroxy-3-oxobutanoate + NADPH + H(+). It participates in amino-acid biosynthesis; L-isoleucine biosynthesis; L-isoleucine from 2-oxobutanoate: step 2/4. The protein operates within amino-acid biosynthesis; L-valine biosynthesis; L-valine from pyruvate: step 2/4. Involved in the biosynthesis of branched-chain amino acids (BCAA). Catalyzes an alkyl-migration followed by a ketol-acid reduction of (S)-2-acetolactate (S2AL) to yield (R)-2,3-dihydroxy-isovalerate. In the isomerase reaction, S2AL is rearranged via a Mg-dependent methyl migration to produce 3-hydroxy-3-methyl-2-ketobutyrate (HMKB). In the reductase reaction, this 2-ketoacid undergoes a metal-dependent reduction by NADPH to yield (R)-2,3-dihydroxy-isovalerate. The polypeptide is Ketol-acid reductoisomerase (NADP(+)) (Phenylobacterium zucineum (strain HLK1)).